The following is a 2171-amino-acid chain: Voltage-dependent L-type calcium channel subunit alpha-1C (2171 aa).

Residues 1–154 are Cytoplasmic-facing; it reads MLRALVQPAT…RACISIVEWK (154 aa). The segment at 77 to 98 is calmodulin-binding; that stretch reads GAALSWQAAIDAARQAKLMGSA. The segment at 103-128 is disordered; that stretch reads ISTVSSTQRKRQQYGKPKKQGSTTAT. Positions 110 to 121 are enriched in basic residues; that stretch reads QRKRQQYGKPKK. Residues 141-438 form an I repeat; the sequence is NPIRRACISI…LVLGVLSGEF (298 aa). The chain crosses the membrane as a helical span at residues 155-173; sequence PFEIIILLTIFANCVALAI. The Extracellular segment spans residues 174–188; the sequence is YIPFPEDDSNATNSN. A glycan (N-linked (GlcNAc...) asparagine) is linked at N183. The helical transmembrane segment at 189–209 threads the bilayer; sequence LERVEYLFLIIFTVEAFLKVI. Over 210–218 the chain is Cytoplasmic; the sequence is AYGLLFHPN. Residues 219–239 traverse the membrane as a helical segment; the sequence is AYLRNGWNLLDFIIVVVGLFS. Topologically, residues 240–262 are extracellular; that stretch reads AILEQATKADGANALGGKGAGFD. Residues 263–281 form a helical membrane-spanning segment; the sequence is VKALRAFRVLRPLRLVSGV. At 282 to 298 the chain is on the cytoplasmic side; it reads PSLQVVLNSIIKAMVPL. The helical transmembrane segment at 299–320 threads the bilayer; that stretch reads LHIALLVLFVIIIYAIIGLELF. Residues 321-380 are Extracellular-facing; that stretch reads MGKMHKTCYNQEGVADVPAEDDPSPCALETGHGRQCQNGTVCKPGWDGPKHGITNFDNFA. Cystine bridges form between C328-C356 and C346-C362. N358 is a glycosylation site (N-linked (GlcNAc...) asparagine). The pore-forming intramembrane region spans 381–402; the sequence is FAMLTVFQCITMEGWTDVLYWM. Residues 391 to 394 carry the Selectivity filter of repeat I motif; sequence TMEG. E393 provides a ligand contact to Ca(2+). The Extracellular portion of the chain corresponds to 403 to 410; that stretch reads QDAMGYEL. Residues 411 to 431 traverse the membrane as a helical segment; that stretch reads PWVYFVSLVIFGSFFVLNLVL. The Cytoplasmic segment spans residues 432-554; sequence GVLSGEFSKE…RKCRAAVKSN (123 aa). The tract at residues 458 to 475 is AID/alpha-interaction domain; mediates interaction with the beta subunit; the sequence is QQLEEDLKGYLDWITQAE. Positions 479-511 are disordered; it reads PENEDEGMDEEKPRNMSMPTSETESVNTENVAG. The segment covering 495 to 508 has biased composition (polar residues); sequence SMPTSETESVNTEN. S499 carries the phosphoserine modification. At T506 the chain carries Phosphothreonine. Residues 540–786 form an II repeat; it reads NRFCRRKCRA…VFLAIAVDNL (247 aa). The chain crosses the membrane as a helical span at residues 555-573; sequence VFYWLVIFLVFLNTLTIAS. Residues 574–584 lie on the Extracellular side of the membrane; sequence EHYNQPHWLTE. The chain crosses the membrane as a helical span at residues 585–605; sequence VQDTANKALLALFTAEMLLKM. Over 606-616 the chain is Cytoplasmic; the sequence is YSLGLQAYFVS. A helical transmembrane segment spans residues 617 to 636; the sequence is LFNRFDCFIVCGGILETILV. At 637–645 the chain is on the extracellular side; the sequence is ETKVMSPLG. Residues 646 to 664 form a helical membrane-spanning segment; it reads ISVLRCVRLLRIFKITRYW. The Cytoplasmic segment spans residues 665–683; sequence NSLSNLVASLLNSVRSIAS. Residues 684–703 traverse the membrane as a helical segment; sequence LLLLLFLFIIIFSLLGMQLF. Topologically, residues 704-723 are extracellular; sequence GGKFNFDEMQTRRSTFDNFP. An intramembrane region (pore-forming) is located at residues 724–745; that stretch reads QSLLTVFQILTGEDWNSVMYDG. The Selectivity filter of repeat II motif lies at 734 to 737; the sequence is TGED. Residue E736 participates in Ca(2+) binding. At 746–755 the chain is on the extracellular side; the sequence is IMAYGGPSFP. The chain crosses the membrane as a helical span at residues 756–775; the sequence is GMLVCIYFIILFICGNYILL. Residues 776–930 lie on the Cytoplasmic side of the membrane; the sequence is NVFLAIAVDN…LQCHRIVNDT (155 aa). The interval 794–891 is disordered; the sequence is SAQKEEEEEK…EMPVGPRPRP (98 aa). The span at 813 to 836 shows a compositional bias: basic and acidic residues; it reads SPEKKQEVVGKPALEEAKEEKIEL. 2 positions are modified to phosphoserine: S838 and S845. The segment at 859–906 is interaction with STAC2; that stretch reads NESEDKSPYPNPETTGEEDEEEPEMPVGPRPRPLSELHLKEKAVPMPE. A compositionally biased stretch (acidic residues) spans 873–882; that stretch reads TGEEDEEEPE. The stretch at 917–1199 is one III repeat; the sequence is NRFRLQCHRI…IFVGFVIVTF (283 aa). The chain crosses the membrane as a helical span at residues 931–949; the sequence is IFTNLILFFILLSSISLAA. At 950–961 the chain is on the extracellular side; the sequence is EDPVQHTSFRNH. The helical transmembrane segment at 962–981 threads the bilayer; sequence ILFYFDIVFTTIFTIEIALK. At 982–997 the chain is on the cytoplasmic side; the sequence is MTAYGAFLHKGSFCRN. A helical membrane pass occupies residues 998–1016; the sequence is YFNILDLLVVSVSLISFGI. The Extracellular segment spans residues 1017–1023; the sequence is QSSAINV. Residues 1024–1042 traverse the membrane as a helical segment; the sequence is VKILRVLRVLRPLRAINRA. Residues 1043–1061 are Cytoplasmic-facing; that stretch reads KGLKHVVQCVFVAIRTIGN. A helical membrane pass occupies residues 1062–1081; it reads IVIVTTLLQFMFACIGVQLF. The Extracellular segment spans residues 1082 to 1131; that stretch reads KGKLYTCSDSSKQTEAECKGNYITYKDGEVDHPIIQPRSWENSKFDFDNV. Cysteines 1088 and 1099 form a disulfide. The tract at residues 1119–1208 is dihydropyridine binding; that stretch reads RSWENSKFDF…FQEQGEQEYK (90 aa). An intramembrane region (pore-forming) is located at residues 1132 to 1152; sequence LAAMMALFTVSTFEGWPELLY. A Selectivity filter of repeat III motif is present at residues 1143–1146; that stretch reads TFEG. E1145 is a Ca(2+) binding site. The Extracellular portion of the chain corresponds to 1153–1169; the sequence is RSIDSHTEDKGPIYNYR. A helical transmembrane segment spans residues 1170–1191; it reads VEISIFFIIYIIIIAFFMMNIF. Residues 1192-1249 are Cytoplasmic-facing; it reads VGFVIVTFQEQGEQEYKNCELDKNQRQCVEYALKARPLRRYIPKNQHQYKVWYVVNST. Residues 1236–1509 form an IV repeat; that stretch reads NQHQYKVWYV…LFVAVIMDNF (274 aa). Residues 1250 to 1271 form a helical membrane-spanning segment; the sequence is YFEYLMFVLILLNTICLAMQHY. Residues 1272-1279 are Extracellular-facing; it reads GQSCLFKI. The chain crosses the membrane as a helical span at residues 1280 to 1301; the sequence is AMNILNMLFTGLFTVEMILKLI. Residues 1302-1311 are Cytoplasmic-facing; that stretch reads AFKPKGYFSD. The helical transmembrane segment at 1312-1331 threads the bilayer; sequence PWNVFDFLIVIGSIIDVILS. Residues 1332-1354 are Extracellular-facing; that stretch reads ETNPAEHTQCSPSMNAEENSRIS. Residues 1355–1373 form a helical membrane-spanning segment; the sequence is ITFFRLFRVMRLVKLLSRG. The Cytoplasmic portion of the chain corresponds to 1374 to 1391; it reads EGIRTLLWTFIKSFQALP. The helical transmembrane segment at 1392–1412 threads the bilayer; sequence YVALLIVMLFFIYAVIGMQVF. Residues 1413–1434 lie on the Extracellular side of the membrane; it reads GKIALNDTTEINRNNNFQTFPQ. A glycan (N-linked (GlcNAc...) asparagine) is linked at N1418. The pore-forming intramembrane region spans 1435-1453; it reads AVLLLFRCATGEAWQDIML. Positions 1444–1447 match the Selectivity filter of repeat IV motif; sequence TGEA. The Extracellular segment spans residues 1454–1481; that stretch reads ACMPGKKCAPESEPHNSTEGETPCGSSF. The interval 1460-1528 is dihydropyridine binding; it reads KCAPESEPHN…LGPHHLDEFK (69 aa). Cysteines 1461 and 1477 form a disulfide. N1469 carries N-linked (GlcNAc...) asparagine glycosylation. The interval 1474 to 1516 is phenylalkylamine binding; that stretch reads ETPCGSSFAVFYFISFYMLCAFLIINLFVAVIMDNFDYLTRDW. A helical membrane pass occupies residues 1482 to 1506; it reads AVFYFISFYMLCAFLIINLFVAVIM. The Cytoplasmic portion of the chain corresponds to 1507-2171; the sequence is DNFDYLTRDW…ADRRAGVSSL (665 aa). Positions 1641–1668 are important for interaction with STAC1, STAC2 and STAC3; the sequence is DEVTVGKFYATFLIQEYFRKFKKRKEQG. Residues 1647–1667 form a calmodulin-binding IQ region region; it reads KFYATFLIQEYFRKFKKRKEQ. Positions 1681–1700 are important for localization in at the junctional membrane; it reads LQAGLRTLHDIGPEIRRAIS. A phosphoserine mark is found at S1700 and S1721. The segment at 1760–1797 is disordered; sequence ISKAGNNQGDTESPSHEKLVDSTFTPSSYSSTGSNANI. Residues 1781-1793 are compositionally biased toward polar residues; the sequence is STFTPSSYSSTGS. S1928 carries the phosphoserine; by PKA modification. Disordered regions lie at residues 1971–2014, 2026–2060, and 2114–2155; these read RSHS…EKLN, SGENSPCRGDSSAARRARPVSLTVPSQAGAQGRQF, and SGGA…PGCG. Basic and acidic residues predominate over residues 2130–2140; it reads NRRDPGRDRAG.

The protein belongs to the calcium channel alpha-1 subunit (TC 1.A.1.11) family. CACNA1C subfamily. As to quaternary structure, component of a calcium channel complex consisting of a pore-forming alpha subunit (CACNA1C) and ancillary beta, gamma and delta subunits. The channel complex contains alpha, beta, gamma and delta subunits in a 1:1:1:1 ratio, i.e. it contains only one of each type of subunit. CACNA1C channel activity is modulated by ancillary subunits, such as CACNB1, CACNB2, CACNB3, CACNA2D1 and CACNA2D4. Interacts with CACNB1. Interacts with CACNB2. Identified in a complex with CACNA2D4 and CACNB3. Interacts with CACNB3. Interacts with CACNA2D1. Interacts with the gamma subunits CACNG4, CACNG6, CACNG7 and CACNG8. Interacts with CACNA2D4. Interacts with CALM1. Interacts (via the N-terminus and the C-terminal C and IQ motifs) with CABP1; this inhibits Ca(2+)-dependent channel inactivation. The binding via the C motif is calcium independent whereas the binding via IQ requires the presence of calcium and is mutually exclusive with calmodulin binding. The binding to the cytoplasmic N-terminal domain is calcium independent but is essential for the channel modulation. Interacts (via C-terminal CDB motif) with CABP5; in a calcium-dependent manner. Interacts with CIB1; the interaction increases upon cardiomyocytes hypertrophy. Interacts with STAC1, STAC2 and STAC3; this inhibits channel inactivation, probably by hindering CALM1 binding. Post-translationally, phosphorylation by PKA at Ser-1928 activates the channel. Elevated levels of blood glucose lead to increased phosphorylation by PKA. As to expression, expression in cardiac muscle. In lung, expressed in airway and vascular smooth muscle cells.

Its subcellular location is the cell membrane. It localises to the sarcolemma. It is found in the perikaryon. The protein resides in the postsynaptic density membrane. The protein localises to the cell projection. Its subcellular location is the dendrite. It localises to the T-tubule. It catalyses the reaction Ca(2+)(in) = Ca(2+)(out). Inhibited by dihydropyridines (DHP), such as isradipine. Inhibited by nifedipine. Channel activity is regulated by Ca(2+) and calmodulin. Binding of STAC1, STAC2 or STAC3 to a region that overlaps with the calmodulin binding site inhibits channel inactivation by Ca(2+) and calmodulin. Binding of calmodulin or CABP1 at the same regulatory sites results in opposite effects on the channel function. Shear stress and pressure increases calcium channel activity. Its function is as follows. Pore-forming, alpha-1C subunit of the voltage-gated calcium channel that gives rise to L-type calcium currents. Mediates influx of calcium ions into the cytoplasm, and thereby triggers calcium release from the sarcoplasm. Plays an important role in excitation-contraction coupling in the heart. Required for normal heart development and normal regulation of heart rhythm. Required for normal contraction of smooth muscle cells in blood vessels and in the intestine. Essential for normal blood pressure regulation via its role in the contraction of arterial smooth muscle cells. Long-lasting (L-type) calcium channels belong to the 'high-voltage activated' (HVA) group. The polypeptide is Voltage-dependent L-type calcium channel subunit alpha-1C (CACNA1C) (Oryctolagus cuniculus (Rabbit)).